The sequence spans 172 residues: Ribosome maturation factor RimM (172 aa).

The region spanning Glu-96–Leu-168 is the PRC barrel domain.

This sequence belongs to the RimM family. In terms of assembly, binds ribosomal protein uS19.

The protein localises to the cytoplasm. In terms of biological role, an accessory protein needed during the final step in the assembly of 30S ribosomal subunit, possibly for assembly of the head region. Essential for efficient processing of 16S rRNA. May be needed both before and after RbfA during the maturation of 16S rRNA. It has affinity for free ribosomal 30S subunits but not for 70S ribosomes. This is Ribosome maturation factor RimM from Streptococcus pyogenes serotype M3 (strain ATCC BAA-595 / MGAS315).